The sequence spans 625 residues: Baeyer-Villiger monooxygenase ATR8 (625 aa).

Residues aspartate 112, 120–123 (TWYW), aspartate 132, and tyrosine 138 each bind FAD. An NADP(+)-binding site is contributed by 130 to 132 (QCD). NADP(+) contacts are provided by residues 266-272 (TGATAIQ), 289-290 (RT), and 405-406 (KR).

It belongs to the FAD-binding monooxygenase family. The cofactor is FAD.

The protein operates within mycotoxin biosynthesis. Its function is as follows. Baeyer-Villiger monooxygenase; part of the core atranone cluster (CAC) which products are predicted to catalyze most or all steps of mycotoxin atranone synthesis, starting from geranylgeranyl pyrophosphate (GGPP). The initial cyclization of GGPP to dolabellane is probably performed by the terpene cyclase ATR13. The Baeyer-Villiger oxidation near the end of the atranone synthesis, which converts atranones D and E to atranones F and G is predicted to be catalyzed by the monooxygenase ATR8. Of the CAC's other predicted gene products, the reducing PKS ATR6 might synthesize a polyketide chain. This polyketide is probably transferred onto the atranone backbone by the polyketide transferase ATR5. Other predicted CAC products include 4 oxygenases (ATR2, ATR3, ATR4, and ATR14), 3 short-chain reductases (ATR7, ATR9, and ATR10), and a methyltransferase (ATR12). These may all be involved in the various steps of atranone biosynthesis, although their specific roles must await experimental determination. This chain is Baeyer-Villiger monooxygenase ATR8, found in Stachybotrys chlorohalonatus (strain IBT 40285).